The chain runs to 183 residues: Caspase recruitment domain-containing protein 19 (183 aa).

A disulfide bridge links C7 with C77. The 92-residue stretch at 8–99 folds into the CARD domain; it reads DRLVQDTPFL…PLHSCLPSRH (92 aa). Residues 122 to 142 form a helical membrane-spanning segment; sequence GPVAFLTCLGLAAGLALLIYC.

In terms of assembly, associates with BCL10 by CARD-CARD interaction.

It is found in the endoplasmic reticulum membrane. Its subcellular location is the mitochondrion membrane. Its function is as follows. Plays a role in inhibiting the effects of BCL10-induced activation of NF-kappa-B. May inhibit the phosphorylation of BCL10 in a CARD-dependent manner. This Bos taurus (Bovine) protein is Caspase recruitment domain-containing protein 19 (CARD19).